The chain runs to 255 residues: Putative ankyrin repeat protein R880 (255 aa).

ANK repeat units lie at residues 79–109 (SGIN…DIHY), 110–139 (KTDY…NINT), 141–169 (DCYA…NVRK), 171–199 (RDLA…DVRS), and 201–229 (KNYA…NFRV).

This chain is Putative ankyrin repeat protein R880, found in Acanthamoeba polyphaga (Amoeba).